We begin with the raw amino-acid sequence, 188 residues long: Gag polyprotein (188 aa).

The span at 77–90 (VGETTVQRDAKMAP) shows a compositional bias: basic and acidic residues. The segment at 77–99 (VGETTVQRDAKMAPEETATPKTV) is disordered. Residues 121-124 (PPPY) carry the PPXY motif motif. Residues 130 to 166 (YPSLAGVGEQQGQGGDTPRGAEQPRAEPGHAGLAPGP) form a disordered region.

Specific enzymatic cleavages in vivo yield mature proteins.

The protein localises to the virion. The sequence is that of Gag polyprotein (ev-2) from Galliformes (EV-2).